A 435-amino-acid polypeptide reads, in one-letter code: Methylenetetrahydrofolate--tRNA-(uracil-5-)-methyltransferase TrmFO (435 aa).

FAD is bound at residue 7-12; sequence GAGLAG.

This sequence belongs to the MnmG family. TrmFO subfamily. The cofactor is FAD.

The protein localises to the cytoplasm. The enzyme catalyses uridine(54) in tRNA + (6R)-5,10-methylene-5,6,7,8-tetrahydrofolate + NADH + H(+) = 5-methyluridine(54) in tRNA + (6S)-5,6,7,8-tetrahydrofolate + NAD(+). It catalyses the reaction uridine(54) in tRNA + (6R)-5,10-methylene-5,6,7,8-tetrahydrofolate + NADPH + H(+) = 5-methyluridine(54) in tRNA + (6S)-5,6,7,8-tetrahydrofolate + NADP(+). In terms of biological role, catalyzes the folate-dependent formation of 5-methyl-uridine at position 54 (M-5-U54) in all tRNAs. The sequence is that of Methylenetetrahydrofolate--tRNA-(uracil-5-)-methyltransferase TrmFO from Thermotoga neapolitana (strain ATCC 49049 / DSM 4359 / NBRC 107923 / NS-E).